A 619-amino-acid polypeptide reads, in one-letter code: DEAD-box ATP-dependent RNA helicase 35B (619 aa).

Low complexity-rich tracts occupy residues 1-10 (MAAAAAAAAA) and 49-58 (PPTTNAVAVA). Residues 1–72 (MAAAAAAAAA…PPRSTSSPAV (72 aa)) are disordered. The short motif at 173 to 201 (RSFGDLRLPEPILRALRGKGIEKPTPIQV) is the Q motif element. Residues 204-388 (LPVALSGRDM…KSALVKPIIV (185 aa)) form the Helicase ATP-binding domain. An ATP-binding site is contributed by 217 to 224 (AFTGSGKT). The short motif at 336–339 (DEAD) is the DEAD box element. A Helicase C-terminal domain is found at 399–559 (DVIQEVEYVK…RLPPILADLD (161 aa)). A CCHC-type zinc finger spans residues 576-593 (KGCAFCGGLGHRIEACPK).

This sequence belongs to the DEAD box helicase family. DDX41 subfamily.

It carries out the reaction ATP + H2O = ADP + phosphate + H(+). The polypeptide is DEAD-box ATP-dependent RNA helicase 35B (Oryza sativa subsp. japonica (Rice)).